Here is a 441-residue protein sequence, read N- to C-terminus: S-adenosylmethionine synthase 1 (441 aa).

Residue Glu9 participates in Mg(2+) binding. Position 15 (His15) interacts with ATP. A K(+)-binding site is contributed by Glu43. Positions 56 and 99 each coordinate L-methionine. ATP is bound by residues 167–169 (DGK), 235–238 (SGRF), Asp246, 252–253 (RK), Ala269, Lys273, and Lys277. Asp246 provides a ligand contact to L-methionine. Lys277 lines the L-methionine pocket.

Belongs to the AdoMet synthase family. Homotetramer. Requires Mn(2+) as cofactor. Mg(2+) is required as a cofactor. The cofactor is Co(2+). It depends on K(+) as a cofactor.

Its subcellular location is the cytoplasm. It carries out the reaction L-methionine + ATP + H2O = S-adenosyl-L-methionine + phosphate + diphosphate. It participates in amino-acid biosynthesis; S-adenosyl-L-methionine biosynthesis; S-adenosyl-L-methionine from L-methionine: step 1/1. In terms of biological role, catalyzes the formation of S-adenosylmethionine from methionine and ATP. The reaction comprises two steps that are both catalyzed by the same enzyme: formation of S-adenosylmethionine (AdoMet) and triphosphate, and subsequent hydrolysis of the triphosphate. This is S-adenosylmethionine synthase 1 (SAMS1) from Daucus carota (Wild carrot).